The chain runs to 27 residues: Secretin (27 aa).

At Val-27 the chain carries Valine amide.

It belongs to the glucagon family.

The protein resides in the secreted. In terms of biological role, hormone involved in different processes, such as regulation of the pH of the duodenal content, food intake and water homeostasis. Exerts its biological effects by binding to secretin receptor (SCTR), a G-protein coupled receptor expressed in the basolateral domain of several cells. Acts as a key gastrointestinal hormone by regulating the pH of the duodenal content. Secreted by S cells of the duodenum in the crypts of Lieberkuehn and regulates the pH of the duodenum by (1) inhibiting the secretion of gastric acid from the parietal cells of the stomach and (2) stimulating the production of bicarbonate (NaHCO(3)) from the ductal cells of the pancreas. Production of bicarbonate is essential to neutralize the pH and ensure no damage is done to the small intestine by the gastric acid. In addition to regulating the pH of the duodenal content, plays a central role in diet induced thermogenesis: acts as a non-sympathetic brown fat (BAT) activator mediating prandial thermogenesis, which consequentially induces satiation. Mechanistically, secretin released by the gut after a meal binds to secretin receptor (SCTR) in brown adipocytes, activating brown fat thermogenesis by stimulating lipolysis, which is sensed in the brain and promotes satiation. Also able to stimulate lipolysis in white adipocytes. Also plays an important role in cellular osmoregulation: released into the systemic circulation in response to hyperosmolality and acts at different levels in the hypothalamus, pituitary and kidney to regulate water homeostasis. Also plays a role in the central nervous system, possibly by acting as a neuropeptide hormone: required for hippocampal synaptic function and neural progenitor cells maintenance. The chain is Secretin from Bos taurus (Bovine).